The sequence spans 88 residues: Small ribosomal subunit protein uS19 (88 aa).

This sequence belongs to the universal ribosomal protein uS19 family.

Its function is as follows. Protein S19 forms a complex with S13 that binds strongly to the 16S ribosomal RNA. This chain is Small ribosomal subunit protein uS19, found in Ureaplasma parvum serovar 3 (strain ATCC 27815 / 27 / NCTC 11736).